The chain runs to 109 residues: uncharacterized protein (109 aa).

Residues 63–109 (DPSTWEPEEHETEHCRGHTLPEKKQKPQGGHGSDKDEDKGNCGCDHC) are disordered. Composition is skewed to basic and acidic residues over residues 73–87 (ETEHCRGHTLPEKKQ) and 94–109 (GSDKDEDKGNCGCDHC).

This is an uncharacterized protein from Caenorhabditis elegans.